The chain runs to 206 residues: Ras-related protein Ral-B (206 aa).

GTP is bound at residue 21–29 (GSGGVGKSA). The short motif at 43–51 (YEPTKADSY) is the Effector region element. Residues 68–72 (DTAGQ), 128–131 (NKSD), and 158–160 (SAK) contribute to the GTP site. A disordered region spans residues 181-206 (MSENKDKNGRKSGKSKKSFKERCCLL). Cys-203 carries the post-translational modification Cysteine methyl ester. Cys-203 carries the S-geranylgeranyl cysteine lipid modification. The propeptide at 204-206 (CLL) is removed in mature form.

The protein belongs to the small GTPase superfamily. Ras family. As to quaternary structure, interacts with EXOC2/Sec5 and EXOC8/Exo84. Interacts (via effector domain) with RALBP1. Post-translationally, prenylation is essential for membrane localization. The farnesylated form confers resistance to the proapoptotic and anti-anchorage-dependent growth effects of some geranylgeranyltransferase I inhibitors.

It localises to the cell membrane. Its subcellular location is the midbody. It catalyses the reaction GTP + H2O = GDP + phosphate + H(+). Alternates between an inactive form bound to GDP and an active form bound to GTP. Activated by a guanine nucleotide-exchange factor (GEF) and inactivated by a GTPase-activating protein (GAP). In terms of biological role, multifunctional GTPase involved in a variety of cellular processes including gene expression, cell migration, cell proliferation, oncogenic transformation and membrane trafficking. Accomplishes its multiple functions by interacting with distinct downstream effectors. Acts as a GTP sensor for GTP-dependent exocytosis of dense core vesicles. Required both to stabilize the assembly of the exocyst complex and to localize functional exocyst complexes to the leading edge of migrating cells. Required for suppression of apoptosis. In late stages of cytokinesis, upon completion of the bridge formation between dividing cells, mediates exocyst recruitment to the midbody to drive abscission. Involved in ligand-dependent receptor mediated endocytosis of the EGF and insulin receptors. This is Ras-related protein Ral-B (Ralb) from Rattus norvegicus (Rat).